A 564-amino-acid polypeptide reads, in one-letter code: Dihydroxy-acid dehydratase 2 (564 aa).

Cysteine 59 contacts [2Fe-2S] cluster. Aspartate 91 lines the Mg(2+) pocket. Cysteine 132 contributes to the [2Fe-2S] cluster binding site. Aspartate 133 and lysine 134 together coordinate Mg(2+). N6-carboxylysine is present on lysine 134. Position 204 (cysteine 204) interacts with [2Fe-2S] cluster. Glutamate 454 contacts Mg(2+). The active-site Proton acceptor is serine 480.

It belongs to the IlvD/Edd family. Homodimer. It depends on [2Fe-2S] cluster as a cofactor. Requires Mg(2+) as cofactor.

The enzyme catalyses (2R)-2,3-dihydroxy-3-methylbutanoate = 3-methyl-2-oxobutanoate + H2O. The catalysed reaction is (2R,3R)-2,3-dihydroxy-3-methylpentanoate = (S)-3-methyl-2-oxopentanoate + H2O. Its pathway is amino-acid biosynthesis; L-isoleucine biosynthesis; L-isoleucine from 2-oxobutanoate: step 3/4. The protein operates within amino-acid biosynthesis; L-valine biosynthesis; L-valine from pyruvate: step 3/4. Its function is as follows. Functions in the biosynthesis of branched-chain amino acids. Catalyzes the dehydration of (2R,3R)-2,3-dihydroxy-3-methylpentanoate (2,3-dihydroxy-3-methylvalerate) into 2-oxo-3-methylpentanoate (2-oxo-3-methylvalerate) and of (2R)-2,3-dihydroxy-3-methylbutanoate (2,3-dihydroxyisovalerate) into 2-oxo-3-methylbutanoate (2-oxoisovalerate), the penultimate precursor to L-isoleucine and L-valine, respectively. The chain is Dihydroxy-acid dehydratase 2 from Staphylococcus saprophyticus subsp. saprophyticus (strain ATCC 15305 / DSM 20229 / NCIMB 8711 / NCTC 7292 / S-41).